A 191-amino-acid polypeptide reads, in one-letter code: Cathelicidin-related antimicrobial peptide Na_CRAMP (191 aa).

A signal peptide spans 1 to 22 (MEGFFWKTLLVVGALTISGTSS). Positions 23–161 (FPHKPLTYEE…DQPKRVKRFK (139 aa)) are excised as a propeptide. 2 cysteine pairs are disulfide-bonded: Cys81/Cys92 and Cys103/Cys120. Residues 126–154 (EEEQKQEEGNEEEKEVEKEEKEEDQKDQP) are disordered. Basic and acidic residues predominate over residues 140 to 154 (EVEKEEKEEDQKDQP).

It belongs to the cathelicidin family. Expressed by the venom gland.

It is found in the secreted. Its subcellular location is the target cell membrane. Its function is as follows. Potent antimicrobial peptide against most of Gram-negative bacteria, some Gram-positive bacteria (Bacillus) and some fungi. Adopts an amphipathic alpha helical conformation, that may allow to partition into the target membrane. No hemolytic and cytotoxic activities have been observed on mammalian cells. This chain is Cathelicidin-related antimicrobial peptide Na_CRAMP, found in Naja atra (Chinese cobra).